The chain runs to 283 residues: MAHLGAHFAFRSRWQKTDDELCRHSMSFILHKAIRNDFFQSYLYLLEKIPLVKLYALTSQVIDGEMQFYARAKLFYQEVPATEEGMMGNFIELSNPDIQASREFLRKFVGGPGRAGTGCALDCGSGIGRVSKHVLLPVFSSVELVDMMESFLLEAQSYLQVNENKVESYHCYSLQEFTPHLGRYDVIWIQWVSGYLTDKDLLAFLSRCRDGLKENGVIILKDNVAREGCIFDLSDSSVTRDMDILRSLIRKSGLVVLGQEKQEGFPEQCVPVWMFALHSDRHS.

Residues G124, R129, D146, 174-175, and Q190 contribute to the S-adenosyl-L-methionine site; that span reads LQ.

The protein belongs to the methyltransferase superfamily. NTM1 family.

It localises to the nucleus. It carries out the reaction N-terminal L-alanyl-L-prolyl-L-lysyl-[protein] + S-adenosyl-L-methionine = N-terminal N-methyl-L-alanyl-L-prolyl-L-lysyl-[protein] + S-adenosyl-L-homocysteine + H(+). The enzyme catalyses N-terminal L-prolyl-L-prolyl-L-lysyl-[protein] + S-adenosyl-L-methionine = N-terminal N-methyl-L-prolyl-L-prolyl-L-lysyl-[protein] + S-adenosyl-L-homocysteine + H(+). It catalyses the reaction N-terminal L-seryl-L-prolyl-L-lysyl-[protein] + S-adenosyl-L-methionine = N-terminal N-methyl-L-seryl-L-prolyl-L-lysyl-[protein] + S-adenosyl-L-homocysteine + H(+). In terms of biological role, alpha N-methyltransferase that methylates the N-terminus of target proteins containing the N-terminal motif [Ala/Pro/Ser]-Pro-Lys when the initiator Met is cleaved. Specifically catalyzes monomethylation of exposed alpha-amino group of Ala or Ser residue in the [Ala/Ser]-Pro-Lys motif and Pro in the Pro-Pro-Lys motif. Predominantly functions as a mono-methyltransferase but is also able to di-/tri-methylate the GPKRIA peptide and di-methylate the PPKRIA peptide (in vitro). May activate NTMT1 by priming its substrates for trimethylation. This is N-terminal Xaa-Pro-Lys N-methyltransferase 2 (Ntmt2) from Rattus norvegicus (Rat).